The sequence spans 264 residues: Thymidylate synthase (264 aa).

DUMP is bound at residue arginine 21. Residue histidine 51 coordinates (6R)-5,10-methylene-5,6,7,8-tetrahydrofolate. 126 to 127 contributes to the dUMP binding site; sequence RR. Cysteine 146 (nucleophile) is an active-site residue. DUMP contacts are provided by residues 166-169, asparagine 177, and 207-209; these read RSAD and HLY. Aspartate 169 contacts (6R)-5,10-methylene-5,6,7,8-tetrahydrofolate. Alanine 263 is a binding site for (6R)-5,10-methylene-5,6,7,8-tetrahydrofolate.

This sequence belongs to the thymidylate synthase family. Bacterial-type ThyA subfamily. Homodimer.

It is found in the cytoplasm. The enzyme catalyses dUMP + (6R)-5,10-methylene-5,6,7,8-tetrahydrofolate = 7,8-dihydrofolate + dTMP. It participates in pyrimidine metabolism; dTTP biosynthesis. Functionally, catalyzes the reductive methylation of 2'-deoxyuridine-5'-monophosphate (dUMP) to 2'-deoxythymidine-5'-monophosphate (dTMP) while utilizing 5,10-methylenetetrahydrofolate (mTHF) as the methyl donor and reductant in the reaction, yielding dihydrofolate (DHF) as a by-product. This enzymatic reaction provides an intracellular de novo source of dTMP, an essential precursor for DNA biosynthesis. This chain is Thymidylate synthase, found in Thiobacillus denitrificans (strain ATCC 25259 / T1).